Reading from the N-terminus, the 336-residue chain is Dihydroorotate dehydrogenase (quinone) (336 aa).

FMN is bound by residues 62 to 66 (AGLDK) and threonine 86. Lysine 66 serves as a coordination point for substrate. 111-115 (NRMGF) is a binding site for substrate. FMN is bound by residues asparagine 139 and asparagine 172. Substrate is bound at residue asparagine 172. Serine 175 (nucleophile) is an active-site residue. Asparagine 177 serves as a coordination point for substrate. FMN-binding residues include lysine 217 and threonine 245. Substrate is bound at residue 246–247 (NT). Residues glycine 268, glycine 297, and 318–319 (YT) contribute to the FMN site.

The protein belongs to the dihydroorotate dehydrogenase family. Type 2 subfamily. As to quaternary structure, monomer. FMN serves as cofactor.

Its subcellular location is the cell membrane. The enzyme catalyses (S)-dihydroorotate + a quinone = orotate + a quinol. Its pathway is pyrimidine metabolism; UMP biosynthesis via de novo pathway; orotate from (S)-dihydroorotate (quinone route): step 1/1. In terms of biological role, catalyzes the conversion of dihydroorotate to orotate with quinone as electron acceptor. The sequence is that of Dihydroorotate dehydrogenase (quinone) from Vibrio parahaemolyticus serotype O3:K6 (strain RIMD 2210633).